Here is a 153-residue protein sequence, read N- to C-terminus: Aspartate carbamoyltransferase regulatory chain (153 aa).

4 residues coordinate Zn(2+): Cys109, Cys114, Cys138, and Cys141.

It belongs to the PyrI family. Contains catalytic and regulatory chains. Requires Zn(2+) as cofactor.

Its function is as follows. Involved in allosteric regulation of aspartate carbamoyltransferase. This Cenarchaeum symbiosum (strain A) protein is Aspartate carbamoyltransferase regulatory chain.